A 398-amino-acid polypeptide reads, in one-letter code: Nuclear egress protein 2 (398 aa).

Topologically, residues 1–359 are perinuclear space; that stretch reads MEMNKVLHQD…GPSRPQSGPW (359 aa). Disordered regions lie at residues 202–246 and 306–334; these read ALTR…PPPP and LEEHVSRRRGVSTHHRHPPSPPCTPSLER. Positions 215-224 are enriched in pro residues; the sequence is ASPPPPPPRH. S216 carries the phosphoserine modification. Residues 225–240 are compositionally biased toward low complexity; the sequence is PSCSPTMVAAGGAAAG. Over residues 311–323 the composition is skewed to basic residues; it reads SRRRGVSTHHRHP. A helical transmembrane segment spans residues 360–382; it reads LPARFATLGPLVLALLLVLALLW. Topologically, residues 383 to 398 are nuclear; the sequence is RGHGQSSSPTRSAHRD.

It belongs to the herpesviridae NEC2 protein family. Forms a heterohexameric complex with NEC1. Interacts with host UBA7 and RNF170; this interaction promotes UBA7 proteasomal degradation. Post-translationally, phosphorylated. Phosphorylation by viral kinase UL97 at Ser-216 plays an important role for correct viral nuclear egress complex (NEC) localization.

It is found in the host nucleus inner membrane. Functionally, plays an essential role in virion nuclear egress, the first step of virion release from infected cell. Within the host nucleus, NEC1 interacts with the newly formed capsid through the vertexes and directs it to the inner nuclear membrane by associating with NEC2. Induces the budding of the capsid at the inner nuclear membrane as well as its envelopment into the perinuclear space. There, the NEC1/NEC2 complex promotes the fusion of the enveloped capsid with the outer nuclear membrane and the subsequent release of the viral capsid into the cytoplasm where it will reach the secondary budding sites in the host Golgi or trans-Golgi network. Inhibits host ISGylation and subsequent innate antiviral response by targeting host UBA7 for proteasomal degradation. The chain is Nuclear egress protein 2 from Homo sapiens (Human).